Reading from the N-terminus, the 359-residue chain is Histidinol-phosphate aminotransferase (359 aa).

An N6-(pyridoxal phosphate)lysine modification is found at Lys220.

This sequence belongs to the class-II pyridoxal-phosphate-dependent aminotransferase family. Histidinol-phosphate aminotransferase subfamily. Homodimer. The cofactor is pyridoxal 5'-phosphate.

It carries out the reaction L-histidinol phosphate + 2-oxoglutarate = 3-(imidazol-4-yl)-2-oxopropyl phosphate + L-glutamate. It participates in amino-acid biosynthesis; L-histidine biosynthesis; L-histidine from 5-phospho-alpha-D-ribose 1-diphosphate: step 7/9. This chain is Histidinol-phosphate aminotransferase, found in Neisseria gonorrhoeae (strain ATCC 700825 / FA 1090).